The sequence spans 239 residues: Ribosomal RNA small subunit methyltransferase G (239 aa).

S-adenosyl-L-methionine contacts are provided by residues glycine 77, phenylalanine 82, 128–129 (AE), and arginine 146. The segment at 215 to 239 (DKKRQTPKKYPRKPGTPNKTPLLEK) is disordered.

This sequence belongs to the methyltransferase superfamily. RNA methyltransferase RsmG family.

It localises to the cytoplasm. In terms of biological role, specifically methylates the N7 position of guanine in position 535 of 16S rRNA. The chain is Ribosomal RNA small subunit methyltransferase G from Staphylococcus aureus (strain USA300).